Here is a 493-residue protein sequence, read N- to C-terminus: E3 ubiquitin-protein ligase Hakai (493 aa).

2 disordered regions span residues 1 to 20 and 28 to 61; these read MDHN…LGGL and IKLI…GDEE. Residues 7 to 16 are compositionally biased toward polar residues; the sequence is DLQGTNSSAS. The RING-type zinc-finger motif lies at 109 to 149; the sequence is CDKCGLPIKMYGRMIPCKHVFCYDCAILHEKKGDKMCPGCN. The segment at 148–206 is HYB domain; it reads CNEPVQRIEQCVRGSLFMCSIVQGCKRTYLSQRDLQAHINHRHMRAGKPVTRPPLEPVH. The C2H2-type zinc-finger motif lies at 164–190; that stretch reads FMCSIVQGCKRTYLSQRDLQAHINHRH. The tract at residues 253-493 is disordered; it reads YNQPHEDIRP…DQARYRPYYQ (241 aa). Composition is skewed to pro residues over residues 262 to 276, 342 to 352, 372 to 389, and 399 to 412; these read PPPA…PPRP, APPPPPPPPIS, APPP…PPPG, and MNHP…PQHG. Residues 427-444 show a composition bias toward polar residues; that stretch reads NPNSLPQFSEDQGTLSPP. Positions 459–469 are enriched in pro residues; it reads PRGPPPPPRMQ. The span at 470–480 shows a compositional bias: low complexity; that stretch reads GPPAQAPLAGP.

This sequence belongs to the Hakai family. As to quaternary structure, homodimer. Interacts with tyrosine-phosphorylated SRC substrates. Component of the WMM complex, a N6-methyltransferase complex composed of a catalytic subcomplex, named MAC, and of an associated subcomplex, named MACOM. Component of the MACOM subcomplex.

The protein resides in the nucleus speckle. It localises to the nucleus. Its subcellular location is the nucleoplasm. The enzyme catalyses S-ubiquitinyl-[E2 ubiquitin-conjugating enzyme]-L-cysteine + [acceptor protein]-L-lysine = [E2 ubiquitin-conjugating enzyme]-L-cysteine + N(6)-ubiquitinyl-[acceptor protein]-L-lysine.. The protein operates within protein modification; protein ubiquitination. In terms of biological role, E3 ubiquitin-protein ligase that mediates ubiquitination of several tyrosine-phosphorylated Src substrates. Associated component of the WMM complex, a complex that mediates N6-methyladenosine (m6A) methylation of RNAs, a modification that plays a role in the efficiency of mRNA splicing and RNA processing. This chain is E3 ubiquitin-protein ligase Hakai, found in Gallus gallus (Chicken).